We begin with the raw amino-acid sequence, 255 residues long: Biotin carboxyl carrier protein of acetyl-CoA carboxylase 2, chloroplastic (255 aa).

Residues 1–87 (MASLSVPCVK…TNVPEPAELS (87 aa)) constitute a chloroplast transit peptide. Residues 148-193 (PPAQPVALPPSPTPTSTPATAKPTSAPSSSHPPLKSPMAGTFYRSP) are disordered. A compositionally biased stretch (pro residues) spans 149–162 (PAQPVALPPSPTPT). Positions 163 to 180 (STPATAKPTSAPSSSHPP) are enriched in low complexity. A Biotinyl-binding domain is found at 178–254 (HPPLKSPMAG…SVDTPLFVIA (77 aa)). Residue K220 is modified to N6-biotinyllysine.

In terms of assembly, acetyl-CoA carboxylase is a heterohexamer composed of biotin carboxyl carrier protein, biotin carboxylase and 2 subunits each of ACCase subunit alpha and ACCase plastid-coded subunit beta (accD). In terms of tissue distribution, primarily expressed in 7 to 10 days after flowering seeds at levels approximately 2-fold less abundant than BCCP1.

The protein resides in the plastid. It localises to the chloroplast. The protein operates within lipid metabolism; fatty acid biosynthesis. Its function is as follows. This protein is a component of the acetyl coenzyme A carboxylase complex; first, biotin carboxylase catalyzes the carboxylation of the carrier protein and then the transcarboxylase transfers the carboxyl group to form malonyl-CoA. The protein is Biotin carboxyl carrier protein of acetyl-CoA carboxylase 2, chloroplastic (BCCP2) of Arabidopsis thaliana (Mouse-ear cress).